Reading from the N-terminus, the 161-residue chain is Myosin regulatory light chain A, smooth adductor muscle (161 aa).

Ala-1 carries the post-translational modification Blocked amino end (Ala). EF-hand domains lie at 20–55 (KLMQ…LGRT) and 89–124 (DTEE…MGDN). The Ca(2+) site is built by Asp-33, Asn-35, Asp-37, and Asp-44.

In terms of biological role, in molluscan muscle, calcium regulation is associated with myosin rather than with actin. Muscle myosin contains two types of light chains: the catalytic light chain, essential for ATPase activity, and the regulatory light chain, a calcium-binding protein responsible for Ca(2+) dependent binding and Ca(2+) dependent Mg-ATPase activity. This Mizuhopecten yessoensis (Japanese scallop) protein is Myosin regulatory light chain A, smooth adductor muscle.